The primary structure comprises 362 residues: Methylthioribose-1-phosphate isomerase (362 aa).

Residue Asp-252 is the Proton donor of the active site.

The protein belongs to the eIF-2B alpha/beta/delta subunits family. MtnA subfamily.

Its subcellular location is the cytoplasm. The protein localises to the nucleus. The enzyme catalyses 5-(methylsulfanyl)-alpha-D-ribose 1-phosphate = 5-(methylsulfanyl)-D-ribulose 1-phosphate. Its pathway is amino-acid biosynthesis; L-methionine biosynthesis via salvage pathway; L-methionine from S-methyl-5-thio-alpha-D-ribose 1-phosphate: step 1/6. Its function is as follows. Catalyzes the interconversion of methylthioribose-1-phosphate (MTR-1-P) into methylthioribulose-1-phosphate (MTRu-1-P). The chain is Methylthioribose-1-phosphate isomerase from Drosophila virilis (Fruit fly).